The following is a 383-amino-acid chain: V-type proton ATPase subunit C 1-A (383 aa).

Position 2 is an N-acetylthreonine (T2).

The protein belongs to the V-ATPase C subunit family. In terms of assembly, V-ATPase is a heteromultimeric enzyme made up of two complexes: the ATP-hydrolytic V1 complex and the proton translocation V0 complex. The V1 complex consists of three catalytic AB heterodimers that form a heterohexamer, three peripheral stalks each consisting of EG heterodimers, one central rotor including subunits D and F, and the regulatory subunits C and H. The proton translocation complex V0 consists of the proton transport subunit a, a ring of proteolipid subunits c9c'', rotary subunit d, subunits e and f, and two accessory subunits.

Functionally, subunit of the V1 complex of vacuolar(H+)-ATPase (V-ATPase), a multisubunit enzyme composed of a peripheral complex (V1) that hydrolyzes ATP and a membrane integral complex (V0) that translocates protons. V-ATPase is responsible for acidifying and maintaining the pH of intracellular compartments and in some cell types, is targeted to the plasma membrane, where it is responsible for acidifying the extracellular environment. Subunit C is necessary for the assembly of the catalytic sector of the enzyme and is likely to have a specific function in its catalytic activity. The protein is V-type proton ATPase subunit C 1-A (atp6v1c1a) of Danio rerio (Zebrafish).